Here is a 163-residue protein sequence, read N- to C-terminus: MSDVENQPFFNIQRVYLKDMSLEQPNSPAIFLEQDMPSVEVEVDVKADRLAESVFEVVVSGTVTAKVKDKVAFLIEAKQAGIFDIRNIPDEQLDPLVGIACPTILFPYLRSNIADAITRAGFPPIHLAEINFQALYEQRLAQLQQQAGAAGAPNGAPNGTTLN.

The protein belongs to the SecB family. In terms of assembly, homotetramer, a dimer of dimers. One homotetramer interacts with 1 SecA dimer.

The protein resides in the cytoplasm. Functionally, one of the proteins required for the normal export of preproteins out of the cell cytoplasm. It is a molecular chaperone that binds to a subset of precursor proteins, maintaining them in a translocation-competent state. It also specifically binds to its receptor SecA. The sequence is that of Protein-export protein SecB from Burkholderia cenocepacia (strain ATCC BAA-245 / DSM 16553 / LMG 16656 / NCTC 13227 / J2315 / CF5610) (Burkholderia cepacia (strain J2315)).